The following is a 198-amino-acid chain: Recombination protein RecR (198 aa).

A C4-type zinc finger spans residues 57 to 72 (CSVCGHITDRDPCYIC). Residues 80 to 175 (SVVCVVQEPK…KVTRIAHGLP (96 aa)) form the Toprim domain.

Belongs to the RecR family.

Its function is as follows. May play a role in DNA repair. It seems to be involved in an RecBC-independent recombinational process of DNA repair. It may act with RecF and RecO. The chain is Recombination protein RecR from Bacillus cytotoxicus (strain DSM 22905 / CIP 110041 / 391-98 / NVH 391-98).